The chain runs to 536 residues: MSIPFTRWPEEFARRYREKGYWQDLPLTDILTRHAASDSIAVIDGERQLSYRELNQAADNLACSLRRQGIKPGETALVQLGNVAELYITFFALLKLGVAPVLALFSHQRSELNAYASQIEPALLIADRQHALFSGDDFLNTFVTEHSSIRVVQLLNDSGEHNLQDAINHPAEDFTATPSPADEVAYFQLSGGTTGTPKLIPRTHNDYYYSVRRSVEICQFTQQTRYLCAIPAAHNYAMSSPGSLGVFLAGGTVVLAADPSATLCFPLIEKHQVNVTALVPPAVSLWLQALIEGESRAQLASLKLLQVGGARLSATLAARIPAEIGCQLQQVFGMAEGLVNYTRLDDSAEKIIHTQGYPMCPDDEVWVADAEGNPLPQGEVGRLMTRGPYTFRGYYKSPQHNASAFDANGFYCSGDLISIDPEGYITVQGREKDQINRGGEKIAAEEIENLLLRHPAVIYAALVSMEDELMGEKSCAYLVVKEPLRAVQVRRFLREQGIAEFKLPDRVECVDSLPLTAVGKVDKKQLRQWLASRASA.

Residues Asn235, Ser240, Gly309, Val331, Ala335, Asp415, and Lys432 each coordinate substrate. A phosphopantetheine binding region spans residues Gly438–Gly439. Lys441 contacts substrate.

This sequence belongs to the ATP-dependent AMP-binding enzyme family. EntE subfamily. As to quaternary structure, proteins EntB, EntD, EntE, and EntF form a multienzyme complex called enterobactin synthase. Monomer. EntA and EntE interact together.

It is found in the membrane. It catalyses the reaction 3 2,3-dihydroxybenzoate + 3 L-serine + 6 ATP = enterobactin + 6 AMP + 6 diphosphate + 4 H(+). The catalysed reaction is 2,3-dihydroxybenzoate + holo-[ACP] + ATP = 2,3-dihydroxybenzoyl-[ACP] + AMP + diphosphate. The enzyme catalyses 2,3-dihydroxybenzoyl-5'-AMP + holo-[ACP] = 2,3-dihydroxybenzoyl-[ACP] + AMP + H(+). Its pathway is siderophore biosynthesis; enterobactin biosynthesis. Its activity is regulated as follows. Inhibited by the adenylate analogs, 5'-O-[N-(salicyl)sulfamoyl]adenosine (Sal-AMS) and 5'-O-[N-(2,3-dihydroxybenzoyl)sulfamoyl]adenosine (DHB-AMS). Adenylation of 2,3-dihydroxybenzoate (DHB) is enhanced by a protein-protein interaction between the EntA and EntE. Functionally, involved in the biosynthesis of the siderophore enterobactin (enterochelin), which is a macrocyclic trimeric lactone of N-(2,3-dihydroxybenzoyl)-serine. The serine trilactone serves as a scaffolding for the three catechol functionalities that provide hexadentate coordination for the tightly ligated iron(2+) atoms. EntE processes via a two-step adenylation-ligation reaction (bi-uni-uni-bi ping-pong mechanism). First, it catalyzes the activation of the carboxylate group of 2,3-dihydroxy-benzoate (DHB), via a reversible ATP-dependent pyrophosphate exchange reactions to yield the acyladenylate intermediate 2,3-dihydroxybenzoyl-AMP. It can also transfer AMP to salicylate, 2,4-dihydroxybenzoate, gentisate and 2,3,4-trihydroxybenzoate. In the second step, DHB is transferred from 2,3-dihydroxybenzoyl-AMP onto the phosphopantetheinylated EntB (holo-EntB) to form DHB-holo-EntB. Then this product will serve in the formation of the amide bond between 2,3-dihydroxybenzoate (DHB) and L-serine. It can also transfer adenylated salicylate to holo-EntB. The protein is Enterobactin synthase component E of Escherichia coli (strain K12).